A 176-amino-acid polypeptide reads, in one-letter code: ATP synthase subunit b (176 aa).

The helical transmembrane segment at 26–45 (VINLAIIIGVLVYFGRGLLG) threads the bilayer.

This sequence belongs to the ATPase B chain family. In terms of assembly, F-type ATPases have 2 components, F(1) - the catalytic core - and F(0) - the membrane proton channel. F(1) has five subunits: alpha(3), beta(3), gamma(1), delta(1), epsilon(1). F(0) has four main subunits: a(1), b(1), b'(1) and c(10-14). The alpha and beta chains form an alternating ring which encloses part of the gamma chain. F(1) is attached to F(0) by a central stalk formed by the gamma and epsilon chains, while a peripheral stalk is formed by the delta, b and b' chains.

It localises to the cellular thylakoid membrane. F(1)F(0) ATP synthase produces ATP from ADP in the presence of a proton or sodium gradient. F-type ATPases consist of two structural domains, F(1) containing the extramembraneous catalytic core and F(0) containing the membrane proton channel, linked together by a central stalk and a peripheral stalk. During catalysis, ATP synthesis in the catalytic domain of F(1) is coupled via a rotary mechanism of the central stalk subunits to proton translocation. Its function is as follows. Component of the F(0) channel, it forms part of the peripheral stalk, linking F(1) to F(0). The chain is ATP synthase subunit b from Synechococcus sp. (strain PCC 6716).